A 281-amino-acid chain; its full sequence is MKVLHTVAEFRQARAAFDVLGFVPTMGYLHQGHLALVEQARRECPAVAVSIFVNPTQFGPNEDYARYPRDTNRDLALLEAAGVDLVFIPSVEEMYPPGFGTYVIQPAADEVLEGAARPGHFRGVATVVCKLFNIVQPTKSYFGQKDAQQTVVVRQMVRDLNLPVEIVIVPTVREPDGLALSSRNVYLNAEQRAAAPVLYRALRTAAERYAAGERDAETLRAVMRSVLAGEPLARPDYVSVAHPLTLRELDRIGADGALLSMAVRFDQVRLIDNWLLEGEGK.

Position 26-33 (26-33 (MGYLHQGH)) interacts with ATP. The Proton donor role is filled by histidine 33. Glutamine 57 contributes to the (R)-pantoate binding site. Glutamine 57 provides a ligand contact to beta-alanine. 143 to 146 (GQKD) lines the ATP pocket. Residue glutamine 149 participates in (R)-pantoate binding. Residues valine 172 and 180–183 (LSSR) contribute to the ATP site.

The protein belongs to the pantothenate synthetase family. Homodimer.

It is found in the cytoplasm. It catalyses the reaction (R)-pantoate + beta-alanine + ATP = (R)-pantothenate + AMP + diphosphate + H(+). Its pathway is cofactor biosynthesis; (R)-pantothenate biosynthesis; (R)-pantothenate from (R)-pantoate and beta-alanine: step 1/1. Catalyzes the condensation of pantoate with beta-alanine in an ATP-dependent reaction via a pantoyl-adenylate intermediate. In Chloroflexus aurantiacus (strain ATCC 29366 / DSM 635 / J-10-fl), this protein is Pantothenate synthetase.